The sequence spans 471 residues: Cytidine and dCMP deaminase domain-containing protein 1 (471 aa).

Positions 1–27 are disordered; it reads MAESNSWRSHRESDGNRSIPNGDDARN. CMP/dCMP-type deaminase domains follow at residues 57 to 153 and 312 to 460; these read LWME…LLSE and GVIR…KLNG. Residues H99, C124, C127, and H393 each contribute to the Zn(2+) site. Residue E395 is the Proton donor of the active site. Zn(2+) is bound by residues C421 and C424.

This sequence belongs to the cytidine and deoxycytidylate deaminase family. Requires Zn(2+) as cofactor.

The enzyme catalyses 2'-deoxycytidine + H2O + H(+) = 2'-deoxyuridine + NH4(+). It carries out the reaction cytidine + H2O + H(+) = uridine + NH4(+). Functionally, catalyzes the deamination of cytidine and deoxycytidine into uridine and deoxyuridine, respectively. In Danio rerio (Zebrafish), this protein is Cytidine and dCMP deaminase domain-containing protein 1 (cdadc1).